We begin with the raw amino-acid sequence, 179 residues long: Negative modulator of initiation of replication (179 aa).

An interaction with DNA region spans residues 86–87 (AV).

The protein belongs to the SeqA family. In terms of assembly, homodimer. Polymerizes to form helical filaments.

It is found in the cytoplasm. Functionally, negative regulator of replication initiation, which contributes to regulation of DNA replication and ensures that replication initiation occurs exactly once per chromosome per cell cycle. Binds to pairs of hemimethylated GATC sequences in the oriC region, thus preventing assembly of replication proteins and re-initiation at newly replicated origins. Repression is relieved when the region becomes fully methylated. The chain is Negative modulator of initiation of replication from Shewanella woodyi (strain ATCC 51908 / MS32).